The chain runs to 194 residues: Translation machinery-associated protein 22 (194 aa).

An SUI1 domain is found at 102–173; the sequence is VQIKRVERNK…DVQEWLLELY (72 aa).

This sequence belongs to the DENR family. In terms of assembly, interacts with the 40S ribosomal subunit.

It is found in the cytoplasm. This is Translation machinery-associated protein 22 (tma22) from Neosartorya fischeri (strain ATCC 1020 / DSM 3700 / CBS 544.65 / FGSC A1164 / JCM 1740 / NRRL 181 / WB 181) (Aspergillus fischerianus).